The primary structure comprises 287 residues: Sulfofructosephosphate aldolase (287 aa).

Catalysis depends on D82, which acts as the Proton donor. Residues H83 and H180 each coordinate Zn(2+). Residue G181 participates in dihydroxyacetone phosphate binding. A Zn(2+)-binding site is contributed by H208. Dihydroxyacetone phosphate is bound by residues 209–211 and 230–233; these read GGS and NVDT.

Belongs to the class II fructose-bisphosphate aldolase family. The cofactor is Zn(2+).

The catalysed reaction is 6-deoxy-6-sulfo-D-fructose 1-phosphate = (2S)-3-sulfolactaldehyde + dihydroxyacetone phosphate. Functionally, part of the sulfo-EMP2 pathway, a D-sulfoquinovose degradation pathway that produces sulfolactate (SL). Cleaves 6-deoxy-6-sulfo-D-fructose 1-phosphate (SFP) to form dihydroxyacetone phosphate (DHAP) and 3-sulfolactaldehyde (SLA). The protein is Sulfofructosephosphate aldolase of Alkalicoccus urumqiensis (Bacillus urumqiensis).